Here is a 541-residue protein sequence, read N- to C-terminus: Protein ST7 homolog (541 aa).

The helical transmembrane segment at 15–35 (FYVALTGTSSLISGLILIFEW) threads the bilayer. A disordered region spans residues 62–116 (DAQSDSSNGSGSSTSSGSSSSSNGGGGGGGGGAGGGGPGAGGGTNSTTTTGTQMP). Residues 67–83 (SSNGSGSSTSSGSSSSS) show a composition bias toward low complexity. Over residues 84 to 105 (NGGGGGGGGGAGGGGPGAGGGT) the composition is skewed to gly residues. The helical transmembrane segment at 476–496 (LPFFILFTAGLCSFTALLALL) threads the bilayer.

The protein belongs to the ST7 family.

The protein localises to the membrane. The protein is Protein ST7 homolog of Drosophila pseudoobscura pseudoobscura (Fruit fly).